The chain runs to 465 residues: Ribulose bisphosphate carboxylase large chain (465 aa).

Residue lysine 4 is modified to N6,N6,N6-trimethyllysine. Substrate is bound by residues residue 113 and threonine 163. Lysine 165 serves as the catalytic Proton acceptor. A substrate-binding site is contributed by lysine 167. Residues lysine 191, aspartate 193, and glutamate 194 each coordinate Mg(2+). Lysine 191 carries the post-translational modification N6-carboxylysine. Histidine 284 (proton acceptor) is an active-site residue. 3 residues coordinate substrate: arginine 285, histidine 317, and serine 369.

Belongs to the RuBisCO large chain family. Type I subfamily. As to quaternary structure, heterohexadecamer of 8 large chains and 8 small chains; disulfide-linked. The disulfide link is formed within the large subunit homodimers. Requires Mg(2+) as cofactor. In terms of processing, the disulfide bond which can form in the large chain dimeric partners within the hexadecamer appears to be associated with oxidative stress and protein turnover.

It is found in the plastid. Its subcellular location is the chloroplast. It catalyses the reaction 2 (2R)-3-phosphoglycerate + 2 H(+) = D-ribulose 1,5-bisphosphate + CO2 + H2O. The enzyme catalyses D-ribulose 1,5-bisphosphate + O2 = 2-phosphoglycolate + (2R)-3-phosphoglycerate + 2 H(+). RuBisCO catalyzes two reactions: the carboxylation of D-ribulose 1,5-bisphosphate, the primary event in carbon dioxide fixation, as well as the oxidative fragmentation of the pentose substrate in the photorespiration process. Both reactions occur simultaneously and in competition at the same active site. The chain is Ribulose bisphosphate carboxylase large chain from Cornus obliqua (Silky dogwood).